Here is a 555-residue protein sequence, read N- to C-terminus: F-box protein COS111 (555 aa).

Disordered stretches follow at residues 31–82 (MSVS…SVSN) and 124–147 (DHSI…KQHH). The segment covering 32 to 42 (SVSSRSSQEES) has biased composition (low complexity). Over residues 48–61 (ESVSSLSMQEQQTE) the composition is skewed to polar residues. Residues 129–142 (SGVTRSTVSTVRPT) show a composition bias toward low complexity. One can recognise an F-box domain in the interval 196–246 (HKDLNSLPHEIMSKIVSHLDQRDVTMCLYVNKNMYSTAVRQLYKEPFFSST). A compositionally biased stretch (low complexity) spans 327 to 346 (SSSSLSCSRTSSNSNSSTES). Residues 327 to 354 (SSSSLSCSRTSSNSNSSTESKPVKKRRS) form a disordered region.

Its function is as follows. F-box protein probably involved in ubiquitin conjugation pathway. This is F-box protein COS111 (COS111) from Yarrowia lipolytica (strain CLIB 122 / E 150) (Yeast).